Reading from the N-terminus, the 206-residue chain is Ribosomal RNA small subunit methyltransferase G (206 aa).

Residues glycine 74, leucine 79, 125 to 126 (VE), and arginine 140 each bind S-adenosyl-L-methionine.

This sequence belongs to the methyltransferase superfamily. RNA methyltransferase RsmG family.

It is found in the cytoplasm. The enzyme catalyses guanosine(527) in 16S rRNA + S-adenosyl-L-methionine = N(7)-methylguanosine(527) in 16S rRNA + S-adenosyl-L-homocysteine. Specifically methylates the N7 position of guanine in position 527 of 16S rRNA. The sequence is that of Ribosomal RNA small subunit methyltransferase G from Shewanella baltica (strain OS223).